The chain runs to 171 residues: S-ribosylhomocysteine lyase (171 aa).

3 residues coordinate Fe cation: histidine 54, histidine 58, and cysteine 128.

It belongs to the LuxS family. As to quaternary structure, homodimer. It depends on Fe cation as a cofactor.

The catalysed reaction is S-(5-deoxy-D-ribos-5-yl)-L-homocysteine = (S)-4,5-dihydroxypentane-2,3-dione + L-homocysteine. Involved in the synthesis of autoinducer 2 (AI-2) which is secreted by bacteria and is used to communicate both the cell density and the metabolic potential of the environment. The regulation of gene expression in response to changes in cell density is called quorum sensing. Catalyzes the transformation of S-ribosylhomocysteine (RHC) to homocysteine (HC) and 4,5-dihydroxy-2,3-pentadione (DPD). The chain is S-ribosylhomocysteine lyase from Campylobacter concisus (strain 13826).